The chain runs to 518 residues: Hyccin (518 aa).

Disordered regions lie at residues 385-410 (GLRR…MDQL) and 466-492 (VFSG…EGVA). The segment covering 393-403 (SSKEKDKEKDA) has biased composition (basic and acidic residues). The segment covering 466 to 484 (VFSGNQPSSRASSPTSNHV) has biased composition (polar residues).

This sequence belongs to the Hyccin family. In terms of assembly, component of a phosphatidylinositol 4-kinase (PI4K) complex.

The protein localises to the cytoplasm. Its subcellular location is the cytosol. The protein resides in the cell membrane. Functionally, component of a complex required to localize phosphatidylinositol 4-kinase (PI4K) to the plasma membrane. The complex acts as a regulator of phosphatidylinositol 4-phosphate (PtdIns(4)P) synthesis. This is Hyccin (hycc1) from Danio rerio (Zebrafish).